A 121-amino-acid polypeptide reads, in one-letter code: Large ribosomal subunit protein uL22 (121 aa).

Belongs to the universal ribosomal protein uL22 family. In terms of assembly, part of the 50S ribosomal subunit.

Functionally, this protein binds specifically to 23S rRNA; its binding is stimulated by other ribosomal proteins, e.g. L4, L17, and L20. It is important during the early stages of 50S assembly. It makes multiple contacts with different domains of the 23S rRNA in the assembled 50S subunit and ribosome. Its function is as follows. The globular domain of the protein is located near the polypeptide exit tunnel on the outside of the subunit, while an extended beta-hairpin is found that lines the wall of the exit tunnel in the center of the 70S ribosome. The sequence is that of Large ribosomal subunit protein uL22 from Synechococcus sp. (strain CC9902).